The primary structure comprises 241 residues: Proteasome subunit alpha type-5 (241 aa).

It belongs to the peptidase T1A family. In terms of assembly, the 26S proteasome consists of a 20S proteasome core and two 19S regulatory subunits. The 20S proteasome core is composed of 28 subunits that are arranged in four stacked rings, resulting in a barrel-shaped structure. The two end rings are each formed by seven alpha subunits, and the two central rings are each formed by seven beta subunits. The catalytic chamber with the active sites is on the inside of the barrel.

It is found in the cytoplasm. The protein localises to the nucleus. Its function is as follows. The proteasome is a multicatalytic proteinase complex which is characterized by its ability to cleave peptides with Arg, Phe, Tyr, Leu, and Glu adjacent to the leaving group at neutral or slightly basic pH. The proteasome has an ATP-dependent proteolytic activity. This chain is Proteasome subunit alpha type-5 (psmA5), found in Dictyostelium discoideum (Social amoeba).